The primary structure comprises 340 residues: Deubiquitinase SseL (340 aa).

Residue histidine 223 is part of the active site. Cysteine 285 (nucleophile) is an active-site residue.

This sequence belongs to the peptidase C79 family.

It is found in the secreted. The protein resides in the host cytoplasm. Effector proteins function to alter host cell physiology and promote bacterial survival in host tissues. This protease targets the host cell ubiquitin pathway by acting as a deubiquitinase in infected host cells. The protein is Deubiquitinase SseL (sseL) of Salmonella choleraesuis (strain SC-B67).